A 327-amino-acid polypeptide reads, in one-letter code: Serine/threonine-protein phosphatase PP1-beta catalytic subunit (327 aa).

The residue at position 2 (alanine 2) is an N-acetylalanine. Positions 63, 65, 91, and 123 each coordinate Mn(2+). Catalysis depends on histidine 124, which acts as the Proton donor. Mn(2+)-binding residues include histidine 172 and histidine 247. The interval 305-327 is disordered; the sequence is QYGGLNSGRPVTPPRTANPPKKR. Threonine 316 carries the post-translational modification Phosphothreonine.

The protein belongs to the PPP phosphatase family. PP-1 subfamily. As to quaternary structure, PP1 comprises a catalytic subunit, PPP1CA, PPP1CB or PPP1CC, which is folded into its native form by inhibitor 2 and glycogen synthetase kinase 3, and then complexed to one or several targeting or regulatory subunits. The targeting or regulatory subunits determine the substrate specificity of PP1. PPP1R12A, PPP1R12B and PPP1R12C mediate binding to myosin. PPP1R3A (in skeletal muscle), PPP1R3B (in liver), PPP1R3C, PPP1R3D and PPP1R3F (in brain) mediate binding to glycogen. PPP1R15A and PPP1R15B mediate binding to EIF2S1. Part of a complex containing PPP1R15B, PP1 and NCK1/2. Interacts with PPP1R7 and PPP1R12C. Interacts with PPP1R16B. Component of the PTW/PP1 phosphatase complex, composed of PPP1R10/PNUTS, TOX4, WDR82, and PPP1CA or PPP1CB or PPP1CC. Interacts with PPP1R8. Interacts with PPP1R12A and NUAK1; the interaction is direct. Interacts with TRIM28; the interaction is weak. Interacts with FOXP3. Interacts with RRP1B. Interacts with SERPINE1. Interacts with LZTR1. Component of the SHOC2-MRAS-PP1c (SMP) complex consisting of SHOC2, GTP-bound M-Ras/MRAS and the catalytic subunit of protein phosphatase 1 (either PPP1CA, PPP1CB or PPP1CC). SHOC2 and PP1c preferably bind M-Ras/MRAS, but they also bind K-Ras/KRAS, N-Ras/NRAS and H-Ras/HRAS; these interactions are GTP-dependent and both SHOC2 and PP1c are required to form a stable complex. Interacts with SHOC2 in the absence of Ras GTPases. Mn(2+) serves as cofactor.

The protein resides in the cytoplasm. Its subcellular location is the nucleus. The protein localises to the nucleoplasm. It is found in the nucleolus. The catalysed reaction is O-phospho-L-seryl-[protein] + H2O = L-seryl-[protein] + phosphate. It catalyses the reaction O-phospho-L-threonyl-[protein] + H2O = L-threonyl-[protein] + phosphate. It carries out the reaction O-phospho-L-seryl-[myosin light chain] + H2O = L-seryl-[myosin light chain] + phosphate. The enzyme catalyses O-phospho-L-threonyl-[myosin light chain] + H2O = L-threonyl-[myosin light chain] + phosphate. Its activity is regulated as follows. Inhibited by the toxins okadaic acid, tautomycin and microcystin Leu-Arg. The phosphatase activity of the PPP1R15A-PP1 complex toward EIF2S1 is specifically inhibited by Salubrinal, a drug that protects cells from endoplasmic reticulum stress. Functionally, protein phosphatase that associates with over 200 regulatory proteins to form highly specific holoenzymes which dephosphorylate hundreds of biological targets. Protein phosphatase (PP1) is essential for cell division, it participates in the regulation of glycogen metabolism, muscle contractility and protein synthesis. Involved in regulation of ionic conductances and long-term synaptic plasticity. Component of the PTW/PP1 phosphatase complex, which plays a role in the control of chromatin structure and cell cycle progression during the transition from mitosis into interphase. In balance with CSNK1D and CSNK1E, determines the circadian period length, through the regulation of the speed and rhythmicity of PER1 and PER2 phosphorylation. May dephosphorylate CSNK1D and CSNK1E. Core component of the SHOC2-MRAS-PP1c (SMP) holophosphatase complex that regulates the MAPK pathway activation. The SMP complex specifically dephosphorylates the inhibitory phosphorylation at 'Ser-259' of RAF1 kinase, 'Ser-365' of BRAF kinase and 'Ser-214' of ARAF kinase, stimulating their kinase activities. The SMP complex enhances the dephosphorylation activity and substrate specificity of PP1c. The sequence is that of Serine/threonine-protein phosphatase PP1-beta catalytic subunit (PPP1CB) from Bos taurus (Bovine).